Reading from the N-terminus, the 178-residue chain is ATP synthase subunit delta (178 aa).

The protein belongs to the ATPase delta chain family. As to quaternary structure, F-type ATPases have 2 components, F(1) - the catalytic core - and F(0) - the membrane proton channel. F(1) has five subunits: alpha(3), beta(3), gamma(1), delta(1), epsilon(1). F(0) has three main subunits: a(1), b(2) and c(10-14). The alpha and beta chains form an alternating ring which encloses part of the gamma chain. F(1) is attached to F(0) by a central stalk formed by the gamma and epsilon chains, while a peripheral stalk is formed by the delta and b chains.

It localises to the cell inner membrane. Functionally, f(1)F(0) ATP synthase produces ATP from ADP in the presence of a proton or sodium gradient. F-type ATPases consist of two structural domains, F(1) containing the extramembraneous catalytic core and F(0) containing the membrane proton channel, linked together by a central stalk and a peripheral stalk. During catalysis, ATP synthesis in the catalytic domain of F(1) is coupled via a rotary mechanism of the central stalk subunits to proton translocation. This protein is part of the stalk that links CF(0) to CF(1). It either transmits conformational changes from CF(0) to CF(1) or is implicated in proton conduction. This is ATP synthase subunit delta from Pseudomonas syringae pv. tomato (strain ATCC BAA-871 / DC3000).